The chain runs to 314 residues: Ribose-phosphate pyrophosphokinase (314 aa).

ATP-binding positions include 37–39 (DGE) and 96–97 (RQ). Residues histidine 131 and aspartate 170 each contribute to the Mg(2+) site. Lysine 194 is an active-site residue. D-ribose 5-phosphate is bound by residues arginine 196, aspartate 220, and 224–228 (DTGGT).

Belongs to the ribose-phosphate pyrophosphokinase family. Class I subfamily. As to quaternary structure, homohexamer. The cofactor is Mg(2+).

It localises to the cytoplasm. The catalysed reaction is D-ribose 5-phosphate + ATP = 5-phospho-alpha-D-ribose 1-diphosphate + AMP + H(+). The protein operates within metabolic intermediate biosynthesis; 5-phospho-alpha-D-ribose 1-diphosphate biosynthesis; 5-phospho-alpha-D-ribose 1-diphosphate from D-ribose 5-phosphate (route I): step 1/1. Its function is as follows. Involved in the biosynthesis of the central metabolite phospho-alpha-D-ribosyl-1-pyrophosphate (PRPP) via the transfer of pyrophosphoryl group from ATP to 1-hydroxyl of ribose-5-phosphate (Rib-5-P). The protein is Ribose-phosphate pyrophosphokinase of Vibrio parahaemolyticus serotype O3:K6 (strain RIMD 2210633).